Reading from the N-terminus, the 150-residue chain is uncharacterized protein (150 aa).

This is an uncharacterized protein from Aquifex aeolicus (strain VF5).